Here is a 98-residue protein sequence, read N- to C-terminus: Co-chaperonin GroES 1 (98 aa).

It belongs to the GroES chaperonin family. Heptamer of 7 subunits arranged in a ring. Interacts with the chaperonin GroEL.

It localises to the cytoplasm. Its function is as follows. Together with the chaperonin GroEL, plays an essential role in assisting protein folding. The GroEL-GroES system forms a nano-cage that allows encapsulation of the non-native substrate proteins and provides a physical environment optimized to promote and accelerate protein folding. GroES binds to the apical surface of the GroEL ring, thereby capping the opening of the GroEL channel. The polypeptide is Co-chaperonin GroES 1 (Rhodopseudomonas palustris (strain ATCC BAA-98 / CGA009)).